Reading from the N-terminus, the 142-residue chain is Ribosome maturation factor RimP (142 aa).

Belongs to the RimP family.

The protein resides in the cytoplasm. Required for maturation of 30S ribosomal subunits. The protein is Ribosome maturation factor RimP of Wolinella succinogenes (strain ATCC 29543 / DSM 1740 / CCUG 13145 / JCM 31913 / LMG 7466 / NCTC 11488 / FDC 602W) (Vibrio succinogenes).